The following is a 266-amino-acid chain: Respiratory nitrate reductase beta chain (266 aa).

4Fe-4S ferredoxin-type domains lie at 3–32 and 30–61; these read VGMV…AWFN and WFNN…KREE. 7 residues coordinate [4Fe-4S] cluster: Cys12, Cys15, Cys18, Cys22, Cys39, Cys42, and Cys47. Residues Cys51 and Cys73 each contribute to the [3Fe-4S] cluster site. The [4Fe-4S] cluster site is built by Cys77, Cys81, Cys84, Cys96, and Cys100.

Heterotrimer composed of an alpha, a beta and a gamma chain. Alpha and beta are catalytic chains; gamma chains are involved in binding the enzyme complex to the cytoplasmic membrane. The cofactor is [4Fe-4S] cluster. [3Fe-4S] cluster is required as a cofactor.

Its subcellular location is the cell membrane. The protein localises to the cytoplasm. It catalyses the reaction nitrate + a quinol = a quinone + nitrite + H2O. Inhibited by micromolar concentrations of azide. The nitrate reductase enzyme complex allows Bradyrhizobium sp. USDA 3045 to use nitrate as an electron acceptor during anaerobic growth. The beta chain is an electron transfer unit containing four cysteine clusters involved in the formation of iron-sulfur centers. Electrons are transferred from the gamma chain to the molybdenum cofactor of the alpha subunit. In Bradyrhizobium sp, this protein is Respiratory nitrate reductase beta chain (narH).